Consider the following 30-residue polypeptide: Varv peptide G (30 aa).

A cross-link (cyclopeptide (Gly-Asn)) is located at residues 1 to 30; sequence GVPVCGETCFGGTCNTPGCSCDPWPVCSRN. 3 disulfide bridges follow: cysteine 5–cysteine 19, cysteine 9–cysteine 21, and cysteine 14–cysteine 27.

This is a cyclic peptide.

Functionally, probably participates in a plant defense mechanism. In Viola arvensis (European field pansy), this protein is Varv peptide G.